A 335-amino-acid chain; its full sequence is MKNELEKVMAGRDMTENEMNMLANSIIQGELSDVQIASFLVALKMKGESASELTGLARALQKAAISIPTNLTNAMDNCGTGGDRSFSFNISTTAAFVLAAGGVNMAKHGNRSITSKSGSADVLEALGINLYLPAEKLAQVFDKVGLVFLFAQNLHPAMKYFTPVRRQLEIPTIMNLTGPLINPIPLDTQLLGTSRPDLLELTANVLKGLGRKRALVITGEGGMDEATPFGLNHYALLENGEVTLHKFRAADVGMSEVALNDIRGGEAPENAEILKNVLENCSSAFLETTVLNAGLGFYANGKVDSIKSGIELAREVIAQGAALEKLHELQAEQIG.

5-phospho-alpha-D-ribose 1-diphosphate contacts are provided by residues G79, 82–83 (GD), S87, 89–92 (NIST), 107–115 (KHGNRSITS), and S119. G79 is a binding site for anthranilate. S91 contributes to the Mg(2+) binding site. N110 serves as a coordination point for anthranilate. R165 contacts anthranilate. The Mg(2+) site is built by D224 and E225.

This sequence belongs to the anthranilate phosphoribosyltransferase family. As to quaternary structure, homodimer. Requires Mg(2+) as cofactor.

The catalysed reaction is N-(5-phospho-beta-D-ribosyl)anthranilate + diphosphate = 5-phospho-alpha-D-ribose 1-diphosphate + anthranilate. The protein operates within amino-acid biosynthesis; L-tryptophan biosynthesis; L-tryptophan from chorismate: step 2/5. Functionally, catalyzes the transfer of the phosphoribosyl group of 5-phosphorylribose-1-pyrophosphate (PRPP) to anthranilate to yield N-(5'-phosphoribosyl)-anthranilate (PRA). This chain is Anthranilate phosphoribosyltransferase, found in Lactococcus lactis subsp. cremoris (strain MG1363).